The sequence spans 264 residues: H-2 class II histocompatibility antigen, E-B beta chain (264 aa).

An N-terminal signal peptide occupies residues 1 to 26; the sequence is MVWLPRVPCVAAVILLLTVLSPPMAL. The tract at residues 27 to 121 is beta-1; sequence VRDSRPWFLE…ISDKFLVRRR (95 aa). Topologically, residues 27–225 are extracellular; the sequence is VRDSRPWFLE…KAQSTSAQNK (199 aa). Disulfide bonds link cysteine 38–cysteine 106 and cysteine 144–cysteine 200. N-linked (GlcNAc...) asparagine glycosylation occurs at asparagine 46. Residues 122-225 are beta-2; the sequence is VEPTVTVYPT…KAQSTSAQNK (104 aa). In terms of domain architecture, Ig-like C1-type spans 124 to 214; it reads PTVTVYPTKT…PSLTDPVTVE (91 aa). A helical membrane pass occupies residues 226–246; sequence MLSGVGGFVLGLLFLGAGLFI. Over 247–264 the chain is Cytoplasmic; the sequence is YFRNQKGQSGLQPTGLLS.

The protein belongs to the MHC class II family. Ubiquitinated in immature dendritic cells leading to down-regulation of MHC class II.

Its subcellular location is the membrane. The chain is H-2 class II histocompatibility antigen, E-B beta chain (H2-Eb1) from Mus musculus (Mouse).